We begin with the raw amino-acid sequence, 280 residues long: Large ribosomal subunit protein uL2 (280 aa).

Disordered regions lie at residues 1–59 (MAIR…GGHK) and 223–280 (GVVM…NKKR). Composition is skewed to basic residues over residues 45–59 (VHGH…GGHK) and 269–280 (VRRRRSNKNKKR).

This sequence belongs to the universal ribosomal protein uL2 family. In terms of assembly, part of the 50S ribosomal subunit. Forms a bridge to the 30S subunit in the 70S ribosome.

In terms of biological role, one of the primary rRNA binding proteins. Required for association of the 30S and 50S subunits to form the 70S ribosome, for tRNA binding and peptide bond formation. It has been suggested to have peptidyltransferase activity; this is somewhat controversial. Makes several contacts with the 16S rRNA in the 70S ribosome. The chain is Large ribosomal subunit protein uL2 from Corynebacterium jeikeium (strain K411).